We begin with the raw amino-acid sequence, 77 residues long: U8-lycotoxin-Ls1d (77 aa).

The N-terminal stretch at 1-20 is a signal peptide; that stretch reads MKLIIFTGLVLFAIVSLIEA. Positions 21–26 are excised as a propeptide; that stretch reads QAENEK.

It belongs to the neurotoxin 19 (CSTX) family. 08 (U8-Lctx) subfamily. Post-translationally, contains 4 disulfide bonds. As to expression, expressed by the venom gland.

Its subcellular location is the secreted. In Lycosa singoriensis (Wolf spider), this protein is U8-lycotoxin-Ls1d.